A 681-amino-acid chain; its full sequence is Transferrin (681 aa).

A signal peptide spans 1–18 (MALKLLTLIALTCAAANA). Transferrin-like domains follow at residues 23–364 (YKLC…ERGH) and 371–676 (VRLC…DVIS). Disulfide bonds link cysteine 26–cysteine 60 and cysteine 35–cysteine 51. Fe(3+)-binding residues include aspartate 75 and tyrosine 108. Disulfide bonds link cysteine 132/cysteine 228, cysteine 181/cysteine 207, cysteine 204/cysteine 213, and cysteine 271/cysteine 284. Hydrogencarbonate-binding residues include threonine 134, arginine 138, valine 140, and glycine 141. Asparagine 218 is a glycosylation site (N-linked (GlcNAc...) asparagine). Residue tyrosine 222 coordinates Fe(3+). Asparagine 355 is a glycosylation site (N-linked (GlcNAc...) asparagine). 2 disulfides stabilise this stretch: cysteine 374-cysteine 411 and cysteine 384-cysteine 402. N-linked (GlcNAc...) asparagine glycosylation occurs at asparagine 418. Disulfide bonds link cysteine 478–cysteine 551, cysteine 506–cysteine 678, and cysteine 579–cysteine 596.

This sequence belongs to the transferrin family.

The protein localises to the secreted. In terms of biological role, transferrins are iron binding transport proteins which bind Fe(3+) ion in association with the binding of an anion, usually bicarbonate. This transferrin binds only one Fe(3+) ion per protein molecule. In Manduca sexta (Tobacco hawkmoth), this protein is Transferrin.